The primary structure comprises 181 residues: Cell division protein ZapC (181 aa).

It belongs to the ZapC family. Interacts directly with FtsZ.

Its subcellular location is the cytoplasm. Functionally, contributes to the efficiency of the cell division process by stabilizing the polymeric form of the cell division protein FtsZ. Acts by promoting interactions between FtsZ protofilaments and suppressing the GTPase activity of FtsZ. The polypeptide is Cell division protein ZapC (Shewanella woodyi (strain ATCC 51908 / MS32)).